Consider the following 383-residue polypeptide: Succinyl-diaminopimelate desuccinylase (383 aa).

His69 contacts Zn(2+). The active site involves Asp71. A Zn(2+)-binding site is contributed by Asp103. Glu137 serves as the catalytic Proton acceptor. Zn(2+) is bound by residues Glu138, Glu166, and His357.

This sequence belongs to the peptidase M20A family. DapE subfamily. As to quaternary structure, homodimer. Requires Zn(2+) as cofactor. It depends on Co(2+) as a cofactor.

It catalyses the reaction N-succinyl-(2S,6S)-2,6-diaminopimelate + H2O = (2S,6S)-2,6-diaminopimelate + succinate. The protein operates within amino-acid biosynthesis; L-lysine biosynthesis via DAP pathway; LL-2,6-diaminopimelate from (S)-tetrahydrodipicolinate (succinylase route): step 3/3. Functionally, catalyzes the hydrolysis of N-succinyl-L,L-diaminopimelic acid (SDAP), forming succinate and LL-2,6-diaminopimelate (DAP), an intermediate involved in the bacterial biosynthesis of lysine and meso-diaminopimelic acid, an essential component of bacterial cell walls. This is Succinyl-diaminopimelate desuccinylase from Rickettsia prowazekii (strain Madrid E).